The sequence spans 547 residues: ATP synthase subunit alpha (547 aa).

173-180 (GDRQTGKT) lines the ATP pocket.

It belongs to the ATPase alpha/beta chains family. F-type ATPases have 2 components, CF(1) - the catalytic core - and CF(0) - the membrane proton channel. CF(1) has five subunits: alpha(3), beta(3), gamma(1), delta(1), epsilon(1). CF(0) has three main subunits: a(1), b(2) and c(9-12). The alpha and beta chains form an alternating ring which encloses part of the gamma chain. CF(1) is attached to CF(0) by a central stalk formed by the gamma and epsilon chains, while a peripheral stalk is formed by the delta and b chains.

It is found in the cell membrane. It carries out the reaction ATP + H2O + 4 H(+)(in) = ADP + phosphate + 5 H(+)(out). Produces ATP from ADP in the presence of a proton gradient across the membrane. The alpha chain is a regulatory subunit. The sequence is that of ATP synthase subunit alpha from Thermobifida fusca (strain YX).